Here is a 347-residue protein sequence, read N- to C-terminus: Lipoyl synthase (347 aa).

Residues Cys-77, Cys-82, Cys-88, Cys-103, Cys-107, Cys-110, and Ser-317 each contribute to the [4Fe-4S] cluster site. The Radical SAM core domain maps to 89–306 (FADGTATFMI…MDYGKKIGFF (218 aa)).

The protein belongs to the radical SAM superfamily. Lipoyl synthase family. [4Fe-4S] cluster is required as a cofactor.

Its subcellular location is the cytoplasm. It carries out the reaction [[Fe-S] cluster scaffold protein carrying a second [4Fe-4S](2+) cluster] + N(6)-octanoyl-L-lysyl-[protein] + 2 oxidized [2Fe-2S]-[ferredoxin] + 2 S-adenosyl-L-methionine + 4 H(+) = [[Fe-S] cluster scaffold protein] + N(6)-[(R)-dihydrolipoyl]-L-lysyl-[protein] + 4 Fe(3+) + 2 hydrogen sulfide + 2 5'-deoxyadenosine + 2 L-methionine + 2 reduced [2Fe-2S]-[ferredoxin]. It functions in the pathway protein modification; protein lipoylation via endogenous pathway; protein N(6)-(lipoyl)lysine from octanoyl-[acyl-carrier-protein]: step 2/2. In terms of biological role, catalyzes the radical-mediated insertion of two sulfur atoms into the C-6 and C-8 positions of the octanoyl moiety bound to the lipoyl domains of lipoate-dependent enzymes, thereby converting the octanoylated domains into lipoylated derivatives. This Psychrobacter arcticus (strain DSM 17307 / VKM B-2377 / 273-4) protein is Lipoyl synthase.